The primary structure comprises 289 residues: Ribosomal protein L11 methyltransferase (289 aa).

S-adenosyl-L-methionine-binding residues include T142, G163, D185, and N226.

This sequence belongs to the methyltransferase superfamily. PrmA family.

It localises to the cytoplasm. The catalysed reaction is L-lysyl-[protein] + 3 S-adenosyl-L-methionine = N(6),N(6),N(6)-trimethyl-L-lysyl-[protein] + 3 S-adenosyl-L-homocysteine + 3 H(+). In terms of biological role, methylates ribosomal protein L11. The polypeptide is Ribosomal protein L11 methyltransferase (Legionella pneumophila (strain Paris)).